A 96-amino-acid chain; its full sequence is Redox-responsive transcriptional regulator WhiB3 (96 aa).

In terms of domain architecture, 4Fe-4S Wbl-type spans 22 to 86 (LCRGVDSSMF…GGLSESEREL (65 aa)). Positions 23, 53, 56, and 62 each coordinate [4Fe-4S] cluster.

It belongs to the WhiB family. The cofactor is [4Fe-4S] cluster. In terms of processing, the Fe-S cluster can be nitrosylated by nitric oxide (NO). Upon Fe-S cluster removal intramolecular disulfide bonds are formed.

Its subcellular location is the cytoplasm. Its function is as follows. A redox-sensitive transcriptional regulator. Maintains intracellular redox homeostasis by regulating catabolic metabolism and polyketide biosynthesis. Regulates expression of the redox buffer ergothioneine (ERG). In concert with myothiol (MSH), another redox buffer, responds to low pH leading to acid resistance. The apo- but not holo-form probably binds DNA. In Mycolicibacterium smegmatis (strain ATCC 700084 / mc(2)155) (Mycobacterium smegmatis), this protein is Redox-responsive transcriptional regulator WhiB3 (whiB3).